The primary structure comprises 143 residues: Large ribosomal subunit protein uL11 (143 aa).

It belongs to the universal ribosomal protein uL11 family. Part of the ribosomal stalk of the 50S ribosomal subunit. Interacts with L10 and the large rRNA to form the base of the stalk. L10 forms an elongated spine to which L12 dimers bind in a sequential fashion forming a multimeric L10(L12)X complex. One or more lysine residues are methylated.

In terms of biological role, forms part of the ribosomal stalk which helps the ribosome interact with GTP-bound translation factors. The protein is Large ribosomal subunit protein uL11 of Chromohalobacter salexigens (strain ATCC BAA-138 / DSM 3043 / CIP 106854 / NCIMB 13768 / 1H11).